The sequence spans 1158 residues: Transient receptor potential cation channel subfamily M member 5 (1158 aa).

Residues 1–729 (MQTTQSSCPG…LTRWRKFWGA (729 aa)) lie on the Cytoplasmic side of the membrane. Ser129 bears the Phosphoserine; by PKC mark. Ca(2+) contacts are provided by Cys341, Asp350, Asp353, and Glu354. Residues 488 to 507 (GRRMEERGPPKRPAGQKWLP) form a disordered region. Residues 552–572 (KIIKEMSHLEKEAEVARTMRE) are a coiled coil. Residues 730–754 (PVTVFLGNVVMYFAFLFLFTYVLLV) form a helical membrane-spanning segment. The Extracellular segment spans residues 755 to 764 (DFRPPPQGPS). A helical membrane pass occupies residues 765-784 (GSEVTLYFWVFTLVLEEIRQ). The Ca(2+) site is built by Glu781 and Gln784. Topologically, residues 785–805 (GFFTDEDTHLVKKFTLYVEDN) are cytoplasmic. Residues 806-824 (WNKCDMVAIFLFIVGVTCR) traverse the membrane as a helical segment. Asn807 and Asp810 together coordinate Ca(2+). Topologically, residues 825 to 831 (MVPSVFE) are extracellular. A helical membrane pass occupies residues 832-854 (AGRTVLAIDFMVFTLRLIHIFAI). Over 855-863 (HKQLGPKII) the chain is Cytoplasmic. The helical transmembrane segment at 864-893 (IVERMMKDVFFFLFFLSVWLVAYGVTTQAL) threads the bilayer. Residues 894–902 (LHPHDGRLE) lie on the Extracellular side of the membrane. An intramembrane region (pore-forming) is located at residues 903–938 (WIFRRVLYRPYLQIFGQIPLDEIDEARVNCSLHPLL). The short motif at 917-919 (FGQ) is the Selectivity filter element. Over 939 to 950 (LESSASCPNLYA) the chain is Extracellular. Residues 951–985 (NWLVILLLVTFLLVTNVLLMNLLIAMFSYTFQVVQ) traverse the membrane as a helical segment. Over 986–1158 (GNADMFWKFQ…LESGLPPSDT (173 aa)) the chain is Cytoplasmic. A Ca(2+)-binding site is contributed by Glu1002. Polar residues predominate over residues 1127–1141 (TYSSSQNCGCRSQPA). The interval 1127 to 1158 (TYSSSQNCGCRSQPASARDREYLESGLPPSDT) is disordered.

The protein belongs to the transient receptor (TC 1.A.4) family. LTrpC subfamily. TRPM5 sub-subfamily. Homotetramer. Post-translationally, multiple phosphorylation sites regulate the Gq/ TRPM5 modulation axis, with the Ser-129 playing a substantial role in this positive modulation. Strongly expressed in liver, heart, testis, brain and kidney. Detected in fetal liver, kidney, spleen, brain, heart and lung, and in adult skin, eyes, spleen, stomach, small intestine, colon, lung, bladder, pancreas and thymus. Biallelically expressed at all stages and tissues examined. Also expressed in subsets of taste receptor cells of the tongue, in olfactory sensory neurons of the main olfactory epithelium and in the vomeronasal organ.

The protein localises to the cell membrane. It catalyses the reaction Na(+)(in) = Na(+)(out). The catalysed reaction is K(+)(in) = K(+)(out). Its activity is regulated as follows. Ca(2+)-activated cation channel. Displays voltage dependence modulation. Regulated by PI(4,5)P2 levels. PI(4,5)P 2 reverses the Ca(2+) -induced desensitization of channels. Inhibited by flufenamic acid with an IC(50) of 24.5 uM and spermine with an IC(50) of 37 uM. Is a highly temperature-sensitive, heat activated channel showing a steep increase of inward currents at temperatures between 15 and 35 degrees Celsius. Heat activation is due to a shift of the voltage-dependent activation curve to negative potentials. The channel is blocked by extracellular acidification. Its function is as follows. Monovalent cation-selective ion channel activated by intracellular Ca(2+) in a voltage- and temperature-dependent manner. Mediates the transport of Na(+), K(+) and Cs(+) ions equally well. Activated directly by increase in intracellular Ca(2+), but is impermeable to it. The activation mechanism of TRPM5 involves a multistep process. TRPM5 activation involves ligand binding (i.e., tastant molecule, glucose stimulation) to Gq/G-protein coupled receptors (GPCR) and leads to the breakdown of phosphatidylinositol bisphosphate (PIP2) into diacylglycerol (DAG) and inositol trisphosphate (IP3), IP3 binds to its receptors in the endoplasmic reticulum and cause Ca(2+) release. Simultaneously with the intracellular Ca(2+) release, DAG activates the protein kinase C (PKC), which phosphorylates the TRPM5 channel. This phosphorylation combined with the bound Ca(2+), leads to a robust inward current allowing the entry of sodium ions (Na+) into the cell. This ion influx depolarizes the cell membrane, generating action potentials that propagate TRPM5 signals. Is a key player in sensing sweet, umami and bitter stimuli. May also be involved in sensing semiochemicals. Involved in insulin secretion by pancreatic beta cells. This chain is Transient receptor potential cation channel subfamily M member 5, found in Mus musculus (Mouse).